We begin with the raw amino-acid sequence, 130 residues long: Granulin (130 aa).

Positions 1-26 are cleaved as a signal peptide; that stretch reads MNYSKIFIFGIISLILMALFSSTVES. Disulfide bonds link Cys67–Cys79 and Cys73–Cys89.

Belongs to the granulin family. Granulins are disulfide bridged.

Its subcellular location is the secreted. This is Granulin (grn) from Dictyostelium discoideum (Social amoeba).